The chain runs to 472 residues: tRNA-2-methylthio-N(6)-dimethylallyladenosine synthase (472 aa).

One can recognise an MTTase N-terminal domain in the interval 22 to 138 (RSYWITTFGC…LETLLQQVDS (117 aa)). The [4Fe-4S] cluster site is built by cysteine 31, cysteine 67, cysteine 101, cysteine 173, cysteine 177, and cysteine 180. The 238-residue stretch at 159 to 396 (RDSAICGWVN…NALVERNARE (238 aa)) folds into the Radical SAM core domain. The 69-residue stretch at 399–467 (IRYQGRTEEV…SFSLSGTPLP (69 aa)) folds into the TRAM domain.

The protein belongs to the methylthiotransferase family. MiaB subfamily. As to quaternary structure, monomer. It depends on [4Fe-4S] cluster as a cofactor.

Its subcellular location is the cytoplasm. It carries out the reaction N(6)-dimethylallyladenosine(37) in tRNA + (sulfur carrier)-SH + AH2 + 2 S-adenosyl-L-methionine = 2-methylsulfanyl-N(6)-dimethylallyladenosine(37) in tRNA + (sulfur carrier)-H + 5'-deoxyadenosine + L-methionine + A + S-adenosyl-L-homocysteine + 2 H(+). In terms of biological role, catalyzes the methylthiolation of N6-(dimethylallyl)adenosine (i(6)A), leading to the formation of 2-methylthio-N6-(dimethylallyl)adenosine (ms(2)i(6)A) at position 37 in tRNAs that read codons beginning with uridine. This is tRNA-2-methylthio-N(6)-dimethylallyladenosine synthase from Synechococcus sp. (strain CC9902).